The primary structure comprises 60 residues: Transcriptional regulatory protein SenN (60 aa).

A DNA-binding region (H-T-H motif) is located at residues 11 to 31 (RFRKRKTFGNQILPLELLIEK).

The protein to B.subtilis SenS.

Its function is as follows. Regulates the expression of extracellular-protein genes of Bacillus natto. This Bacillus subtilis subsp. natto protein is Transcriptional regulatory protein SenN (senN).